The sequence spans 315 residues: Bifunctional pinoresinol-lariciresinol reductase (315 aa).

NADP(+) contacts are provided by residues 14–20, Arg39, and Lys48; that span reads GGTGYLG. Lys142 (proton acceptor) is an active-site residue. NADP(+) is bound at residue Arg146. Substrate is bound at residue His274.

It belongs to the NmrA-type oxidoreductase family. Isoflavone reductase subfamily. As to quaternary structure, dimer.

It catalyses the reaction (+)-lariciresinol + NADP(+) = (+)-pinoresinol + NADPH + H(+). The enzyme catalyses (-)-secoisolariciresinol + NADP(+) = (+)-lariciresinol + NADPH + H(+). Its function is as follows. Reductase involved in lignan (-)-hinokinin biosynthesis. Catalyzes the enantioselective conversion of (+)-pinoresinol into (+)-lariciresinol and of (+)-lariciresinol into (-)-secoisolariciresinol. Abstracts the 4R-hydride from the NADPH cofactor during catalysis. Has also a low phenylcoumaran benzylic ether reductase activity. The polypeptide is Bifunctional pinoresinol-lariciresinol reductase (PLR_Lc1) (Linum corymbulosum (Linum)).